The primary structure comprises 501 residues: Rhazimal synthase (501 aa).

Residues 4-24 traverse the membrane as a helical segment; it reads MQLSFASAVVYSLIFFVFLLV. Asparagine 282 carries an N-linked (GlcNAc...) asparagine glycan. Cysteine 442 is a heme binding site.

Belongs to the cytochrome P450 family. The cofactor is heme.

It localises to the membrane. It catalyses the reaction (19E)-geissoschizine + reduced [NADPH--hemoprotein reductase] + O2 = rhazimal + oxidized [NADPH--hemoprotein reductase] + 2 H2O + H(+). It carries out the reaction (19E)-geissoschizine + reduced [NADPH--hemoprotein reductase] + O2 = akuammicine + formate + oxidized [NADPH--hemoprotein reductase] + H2O + H(+). It participates in alkaloid biosynthesis. Its function is as follows. A cytochrome P450 monooxygenase involved in the biosynthesis of akuammilan monoterpene indole alkaloids (MIAs) natural products, components with various biological properties such as antidiabetic, antibacterial, anti-inflammatory, anticancer, and antimalarial activities. Catalyzes the conversion of geissoschizine to rhazimal. Can also, with lower efficiency, support the conversion of geissoschizine to akuammicine. The chain is Rhazimal synthase from Alstonia scholaris (Dogbane).